Here is a 483-residue protein sequence, read N- to C-terminus: Probable cytochrome P450 517A1 (483 aa).

A helical membrane pass occupies residues 1 to 21 (MEIINVFLFLIILFLVKDFVK). Heme is bound at residue Cys-429.

Belongs to the cytochrome P450 family. It depends on heme as a cofactor.

The protein localises to the membrane. This Dictyostelium discoideum (Social amoeba) protein is Probable cytochrome P450 517A1 (cyp517A1).